Consider the following 126-residue polypeptide: Phosphoribosyl-AMP cyclohydrolase (126 aa).

Position 76 (Asp-76) interacts with Mg(2+). Cys-77 contacts Zn(2+). Mg(2+)-binding residues include Asp-78 and Asp-80. Zn(2+) contacts are provided by Cys-94 and Cys-101.

It belongs to the PRA-CH family. Homodimer. Requires Mg(2+) as cofactor. Zn(2+) is required as a cofactor.

It is found in the cytoplasm. The catalysed reaction is 1-(5-phospho-beta-D-ribosyl)-5'-AMP + H2O = 1-(5-phospho-beta-D-ribosyl)-5-[(5-phospho-beta-D-ribosylamino)methylideneamino]imidazole-4-carboxamide. Its pathway is amino-acid biosynthesis; L-histidine biosynthesis; L-histidine from 5-phospho-alpha-D-ribose 1-diphosphate: step 3/9. Catalyzes the hydrolysis of the adenine ring of phosphoribosyl-AMP. The chain is Phosphoribosyl-AMP cyclohydrolase from Nitratidesulfovibrio vulgaris (strain ATCC 29579 / DSM 644 / CCUG 34227 / NCIMB 8303 / VKM B-1760 / Hildenborough) (Desulfovibrio vulgaris).